Consider the following 242-residue polypeptide: Cell division protein FtsQ (242 aa).

Residues 1–12 (MWDNAEAMERLT) lie on the Cytoplasmic side of the membrane. Residues 13–32 (RWLLVMMAMLLAASGLVWFY) form a helical membrane-spanning segment. Over 33-242 (NSNHLPVKQV…DGLPEKESEE (210 aa)) the chain is Periplasmic. Residues 37 to 106 (LPVKQVSLKG…DTVEVVLTER (70 aa)) enclose the POTRA domain.

The protein belongs to the FtsQ/DivIB family. FtsQ subfamily. In terms of assembly, part of a complex composed of FtsB, FtsL and FtsQ.

Its subcellular location is the cell inner membrane. Essential cell division protein. May link together the upstream cell division proteins, which are predominantly cytoplasmic, with the downstream cell division proteins, which are predominantly periplasmic. May control correct divisome assembly. This is Cell division protein FtsQ from Neisseria gonorrhoeae (strain ATCC 700825 / FA 1090).